We begin with the raw amino-acid sequence, 150 residues long: MDTVSIAEFLYTNADLLNQEQFDSWLEQCSNDFSYRITTFSEELGRPMDWMDKDKSGLAHYLQNANNHERYTGRLRRHLAMPRVTKQADSSFEVRTAVAIYVIEMNGETALYGIGSYVDNVMSESSGLRLTSRVVTLDTRRLQFGPHVPI.

It belongs to the bacterial ring-hydroxylating dioxygenase beta subunit family. Heterotetramer with a alpha2beta2 structure.

The enzyme catalyses 2-aminobenzenesulfonate + NADH + O2 + 2 H(+) = 2,3-dihydroxybenzenesulfonate + NH4(+) + NAD(+). Its activity is regulated as follows. Inhibited by o-phenanthroline. In terms of biological role, beta subunit of the oxygenase component of the 2-aminobenzenesulfonate 2,3-dioxygenase system (deaminating) (ABSDOS). Can use 2-aminobenzenesulfonate (ABS), benzenesulfonate (BS), 4-toluenesulfonate (TS), 2-nitrobenzenesulfonate, 3- and 4-aminobenzenesulfonates, 4-chloro- and 4-hydroxybenzenesulfonates and pyridine-3-sulfonate as substrates. No desulfonation of ABS to aminocatechol or aminophenol detected. This Alcaligenes sp protein is 2-aminobenzenesulfonate 2,3-dioxygenase subunit beta.